The chain runs to 3342 residues: Large tegument protein deneddylase (3342 aa).

The segment at 1-302 (MTDSTDSRQA…SRIYGTSDIV (302 aa)) is deubiquitination activity. A Peptidase C76 domain is found at 78–298 (VAVGIRNQFA…ISTVSRIYGT (221 aa)). Active-site residues include Cys-98, Asp-232, and His-234. A disordered region spans residues 472–554 (RRPLWTPQSS…SPTTSNRGED (83 aa)). Low complexity predominate over residues 480–494 (SSSENISLDGSSSSL). Positions 514-526 (VTSTESSDVTENV) are enriched in polar residues. Residues 630–656 (LYVCMMDIFARLFNYIIENGARTTSDR) form an interaction with inner tegument protein region. 3 disordered regions span residues 2584–2603 (DGDA…TYAD), 2654–2987 (PQIG…SRKH), and 3196–3279 (PKHD…SSTS). Pro residues-rich tracts occupy residues 2701–2743 (TPAP…PKPK), 2751–2777 (KPSP…PKPK), 2785–2799 (KPTP…SKPK), 2823–2837 (KPSP…PKPK), and 2845–2897 (KPTP…PKPK). Residues 2911 to 2947 (NSDSKTSPVPNPNTFSASKIPPTSSIAEETKPCQSNL) are compositionally biased toward polar residues. Low complexity predominate over residues 3264–3279 (HVSGSTDTTTDGSSTS).

Belongs to the herpesviridae large tegument protein family. In terms of assembly, interacts with host CUL1 and CUL4A; these interactions inhibit the E3 ligase activity of cullins. Interacts with inner tegument protein. Interacts with capsid vertex specific component CVC2. Interacts with the major capsid protein/MCP.

The protein resides in the virion tegument. It localises to the host cytoplasm. The protein localises to the host nucleus. The enzyme catalyses Thiol-dependent hydrolysis of ester, thioester, amide, peptide and isopeptide bonds formed by the C-terminal Gly of ubiquitin (a 76-residue protein attached to proteins as an intracellular targeting signal).. Large tegument protein that plays multiple roles in the viral cycle. During viral entry, remains associated with the capsid while most of the tegument is detached and participates in the capsid transport toward the host nucleus. Plays a role in the routing of the capsid at the nuclear pore complex and subsequent uncoating. Within the host nucleus, acts as a deneddylase and promotes the degradation of nuclear CRLs (cullin-RING ubiquitin ligases) and thereby stabilizes nuclear CRL substrates, while cytoplasmic CRLs remain unaffected. These modifications prevent host cell cycle S-phase progression and create a favorable environment allowing efficient viral genome replication. Participates later in the secondary envelopment of capsids. Indeed, plays a linker role for the association of the outer viral tegument to the capsids together with the inner tegument protein. The polypeptide is Large tegument protein deneddylase (MDV049) (Gallus gallus (Chicken)).